The primary structure comprises 552 residues: Hydroxylamine reductase (552 aa).

[2Fe-2S] cluster is bound by residues C5, C8, C20, and C27. Hybrid [4Fe-2O-2S] cluster-binding residues include H251, E275, C319, C407, C435, C460, E494, and K496. C407 bears the Cysteine persulfide mark.

Belongs to the HCP family. Requires [2Fe-2S] cluster as cofactor. Hybrid [4Fe-2O-2S] cluster is required as a cofactor.

Its subcellular location is the cytoplasm. The enzyme catalyses A + NH4(+) + H2O = hydroxylamine + AH2 + H(+). Its function is as follows. Catalyzes the reduction of hydroxylamine to form NH(3) and H(2)O. This chain is Hydroxylamine reductase, found in Escherichia coli (strain UTI89 / UPEC).